Here is a 205-residue protein sequence, read N- to C-terminus: Transmembrane emp24 domain-containing protein A (205 aa).

The first 24 residues, 1–24, serve as a signal peptide directing secretion; that stretch reads MMNNKLLLLVIALLCIASNSIVES. Residues 25–172 are Lumenal-facing; it reads FSFKVSAKVE…RNTAESTNSR (148 aa). One can recognise a GOLD domain in the interval 34 to 116; sequence EECIYEEIGV…DKTVSFILSV (83 aa). Residues 173 to 193 form a helical membrane-spanning segment; sequence VLWWSVFEAFVLIALSIWQIY. The Cytoplasmic segment spans residues 194-205; that stretch reads YLRRFFEVKRAV.

Belongs to the EMP24/GP25L family.

The protein localises to the cytoplasmic vesicle membrane. Its function is as follows. Could have a role in the budding of coatomer-coated and other species of coated vesicles. The polypeptide is Transmembrane emp24 domain-containing protein A (empA) (Dictyostelium discoideum (Social amoeba)).